Reading from the N-terminus, the 883-residue chain is 3-hydroxy-3-methylglutaryl-coenzyme A reductase (883 aa).

Residues 1-9 (MLSRLFRMH) are Cytoplasmic-facing. A helical transmembrane segment spans residues 10–39 (GQFVASHPWEVIVGTVTLTICMMSMNMFTG). At 40–56 (NDKICGWNYACPKFEED) the chain is on the lumenal side. Residues 57-78 (VLSSDIIILTITRCIAILYIYF) form a helical membrane-spanning segment. The Cytoplasmic portion of the chain corresponds to 79–89 (QFQNLRQLGSK). The chain crosses the membrane as a helical span at residues 90–114 (YILGIAGLFTIFSSFVFSTVVIHFL). Over 115-123 (DKELTGLNE) the chain is Lumenal. The helical transmembrane segment at 124-149 (ALPFFLLLIDLSKASALAKFALSSNS) threads the bilayer. Topologically, residues 150 to 159 (QDEVRDNIAR) are cytoplasmic. A helical membrane pass occupies residues 160–187 (GMAILGPTFTLEALVECLVIGVGTMSGV). At 188 to 191 (RQLE) the chain is on the lumenal side. Residues 192-220 (IMCCFGCMSVLANYFAFMTFFPACVSLVL) form a helical membrane-spanning segment. Residues 221–249 (ELSRESREGRPIWQLSQFASVLEEEEDNK) are Cytoplasmic-facing. Residues 250 to 276 (PNPVTQRVKMIMSLGLVLVHAHSRWIS) traverse the membrane as a helical segment. The Lumenal portion of the chain corresponds to 277 to 316 (EPSSQNSTSISDHEVTTMLDDMMPKRVEPSMPLWQFYLSR). A glycan (N-linked (GlcNAc...) asparagine) is linked at asparagine 282. Residues 317-341 (MVTMDVEQIITLGLALLLAVKYIFF) form a helical membrane-spanning segment. The Cytoplasmic segment spans residues 342–883 (EQTETESTFS…LPGTCTKKAA (542 aa)). Positions 373–396 (REPEQEKTVHVSTTEEASSKEETE) are disordered. Residues glutamate 554, lysine 686, and aspartate 762 each act as charge relay system in the active site. Histidine 861 functions as the Proton donor in the catalytic mechanism.

The protein belongs to the HMG-CoA reductase family. Homotetramer. Homodimer.

The protein resides in the endoplasmic reticulum membrane. Its subcellular location is the peroxisome membrane. It catalyses the reaction (R)-mevalonate + 2 NADP(+) + CoA = (3S)-3-hydroxy-3-methylglutaryl-CoA + 2 NADPH + 2 H(+). It participates in metabolic intermediate biosynthesis; (R)-mevalonate biosynthesis; (R)-mevalonate from acetyl-CoA: step 3/3. In terms of biological role, catalyzes the conversion of (3S)-hydroxy-3-methylglutaryl-CoA (HMG-CoA) to mevalonic acid, the rate-limiting step in the synthesis of cholesterol and other isoprenoids, thus plays a critical role in cellular cholesterol homeostasis. The polypeptide is 3-hydroxy-3-methylglutaryl-coenzyme A reductase (hmgcr) (Xenopus laevis (African clawed frog)).